The chain runs to 288 residues: ATP synthase gamma chain (288 aa).

It belongs to the ATPase gamma chain family. As to quaternary structure, F-type ATPases have 2 components, CF(1) - the catalytic core - and CF(0) - the membrane proton channel. CF(1) has five subunits: alpha(3), beta(3), gamma(1), delta(1), epsilon(1). CF(0) has three main subunits: a, b and c.

Its subcellular location is the cell inner membrane. Produces ATP from ADP in the presence of a proton gradient across the membrane. The gamma chain is believed to be important in regulating ATPase activity and the flow of protons through the CF(0) complex. In Vesicomyosocius okutanii subsp. Calyptogena okutanii (strain HA), this protein is ATP synthase gamma chain.